Reading from the N-terminus, the 152-residue chain is MLHSSIYWKNLINTFESGCFSIAEVKFIFSNIHIYKNICNPYKNYQLPELARNLQSSKKLDNAILKQDKKNIIDILSPISGIFYSSSKPGASPFVAVGSVVSKGQTLCIIEAMKTMNEIESDSIGKIHQICARNGDFVTKNQVLMKIILEQS.

The 77-residue stretch at 72 to 148 (IIDILSPISG…TKNQVLMKII (77 aa)) folds into the Biotinyl-binding domain. An N6-biotinyllysine modification is found at lysine 114.

The protein resides in the plastid. It localises to the chloroplast. Its pathway is lipid metabolism; fatty acid biosynthesis. In terms of biological role, this protein is a component of the acetyl coenzyme A carboxylase complex; first, biotin carboxylase catalyzes the carboxylation of the carrier protein and then the transcarboxylase transfers the carboxyl group to form malonyl-CoA. In Cyanidium caldarium (Red alga), this protein is Biotin carboxyl carrier protein of acetyl-CoA carboxylase (accB).